The following is a 344-amino-acid chain: N,N-dimethyltransferase OxyT (344 aa).

S-adenosyl-L-methionine is bound by residues Asp205 and 231 to 233; that span reads GDF.

It belongs to the class I-like SAM-binding methyltransferase superfamily. Cation-independent O-methyltransferase family.

The catalysed reaction is 4-amino-4-dedimethylamino-anhydrotetracycline + S-adenosyl-L-methionine = 4-methylamino-4-dedimethylamino-anhydrotetracycline + S-adenosyl-L-homocysteine + H(+). It carries out the reaction 4-methylamino-4-dedimethylamino-anhydrotetracycline + S-adenosyl-L-methionine = anhydrotetracycline + S-adenosyl-L-homocysteine + H(+). It functions in the pathway antibiotic biosynthesis; oxytetracycline biosynthesis. Functionally, involved in the biosynthesis of the tetracycline antibiotic, oxytetracycline. Catalyzes the dimethylation of 4-amino-4-de(dimethylamino)anhydrotetracycline (4-amino-ATC) to yield anhydrotetracycline (ATC). Also able to catalyze the dimethylation of 7-chloro-, 6-demethyl-, 2-decarboxamido-2-nitrile-, and 4-methylamino-derivatives of 4-amino-4-de(dimethylamino)anhydrotetracycline. In Streptomyces rimosus, this protein is N,N-dimethyltransferase OxyT.